Reading from the N-terminus, the 385-residue chain is 8-amino-7-oxononanoate synthase (385 aa).

R21 is a substrate binding site. 108 to 109 contacts pyridoxal 5'-phosphate; it reads GF. H133 is a binding site for substrate. The pyridoxal 5'-phosphate site is built by S179, H207, and T233. An N6-(pyridoxal phosphate)lysine modification is found at K236. Residue T352 participates in substrate binding.

The protein belongs to the class-II pyridoxal-phosphate-dependent aminotransferase family. BioF subfamily. In terms of assembly, homodimer. It depends on pyridoxal 5'-phosphate as a cofactor.

The enzyme catalyses 6-carboxyhexanoyl-[ACP] + L-alanine + H(+) = (8S)-8-amino-7-oxononanoate + holo-[ACP] + CO2. Its pathway is cofactor biosynthesis; biotin biosynthesis. Catalyzes the decarboxylative condensation of pimeloyl-[acyl-carrier protein] and L-alanine to produce 8-amino-7-oxononanoate (AON), [acyl-carrier protein], and carbon dioxide. The sequence is that of 8-amino-7-oxononanoate synthase from Salmonella paratyphi B (strain ATCC BAA-1250 / SPB7).